A 567-amino-acid chain; its full sequence is Potassium-transporting ATPase potassium-binding subunit (567 aa).

Transmembrane regions (helical) follow at residues 5–25 (GWIQILVFCGIIGLLTKPLGF), 64–84 (TAYAVALLLFNLAGFLVLYAL), 136–156 (GLTVQNFVSAATGIAIAIALI), 179–199 (LYVLLPLCIVLTLVYVWLGIP), 254–274 (ISNLIQMVTIFALGAALTNVF), 285–305 (WAILASMGALFIAGVAVCYWA), 330–350 (FGIALSALFAVITTAASCGAV), 357–376 (FTALGGMIPLINMQLGEVIV), 421–441 (MLAILCLPLAMLIFTAIAVVL), 486–506 (ITIGIGMLMGRFLVIIPALAI), and 529–549 (LFVGLLIGVIVIVGGLTFFPA).

The protein belongs to the KdpA family. As to quaternary structure, the system is composed of three essential subunits: KdpA, KdpB and KdpC.

The protein localises to the cell inner membrane. In terms of biological role, part of the high-affinity ATP-driven potassium transport (or Kdp) system, which catalyzes the hydrolysis of ATP coupled with the electrogenic transport of potassium into the cytoplasm. This subunit binds the periplasmic potassium ions and delivers the ions to the membrane domain of KdpB through an intramembrane tunnel. This Mesorhizobium japonicum (strain LMG 29417 / CECT 9101 / MAFF 303099) (Mesorhizobium loti (strain MAFF 303099)) protein is Potassium-transporting ATPase potassium-binding subunit.